Consider the following 110-residue polypeptide: DNA-directed RNA polymerase subunit omega (110 aa).

It belongs to the RNA polymerase subunit omega family. In terms of assembly, the RNAP catalytic core consists of 2 alpha, 1 beta, 1 beta' and 1 omega subunit. When a sigma factor is associated with the core the holoenzyme is formed, which can initiate transcription.

It carries out the reaction RNA(n) + a ribonucleoside 5'-triphosphate = RNA(n+1) + diphosphate. Its function is as follows. Promotes RNA polymerase assembly. Latches the N- and C-terminal regions of the beta' subunit thereby facilitating its interaction with the beta and alpha subunits. This chain is DNA-directed RNA polymerase subunit omega, found in Nocardioides sp. (strain ATCC BAA-499 / JS614).